A 110-amino-acid chain; its full sequence is Large ribosomal subunit protein uL22 (110 aa).

Belongs to the universal ribosomal protein uL22 family. Part of the 50S ribosomal subunit.

This protein binds specifically to 23S rRNA; its binding is stimulated by other ribosomal proteins, e.g. L4, L17, and L20. It is important during the early stages of 50S assembly. It makes multiple contacts with different domains of the 23S rRNA in the assembled 50S subunit and ribosome. Its function is as follows. The globular domain of the protein is located near the polypeptide exit tunnel on the outside of the subunit, while an extended beta-hairpin is found that lines the wall of the exit tunnel in the center of the 70S ribosome. This chain is Large ribosomal subunit protein uL22, found in Solidesulfovibrio magneticus (strain ATCC 700980 / DSM 13731 / RS-1) (Desulfovibrio magneticus).